A 102-amino-acid chain; its full sequence is Small ribosomal subunit protein uS10 (102 aa).

Belongs to the universal ribosomal protein uS10 family. Part of the 30S ribosomal subunit.

In terms of biological role, involved in the binding of tRNA to the ribosomes. In Lactobacillus gasseri (strain ATCC 33323 / DSM 20243 / BCRC 14619 / CIP 102991 / JCM 1131 / KCTC 3163 / NCIMB 11718 / NCTC 13722 / AM63), this protein is Small ribosomal subunit protein uS10.